We begin with the raw amino-acid sequence, 338 residues long: Ketol-acid reductoisomerase (NADP(+)) (338 aa).

Residues 1 to 181 (MKIYYDKDCN…GGGRAGIIET (181 aa)) enclose the KARI N-terminal Rossmann domain. Residues 24 to 27 (YGSQ), K47, S50, S52, and 82 to 85 (DEIQ) contribute to the NADP(+) site. The active site involves H107. Residue G133 participates in NADP(+) binding. The 146-residue stretch at 182–327 (SFKEETETDL…ARLRSMMSWI (146 aa)) folds into the KARI C-terminal knotted domain. Mg(2+)-binding residues include D190, E194, E226, and E230. S251 is a substrate binding site.

It belongs to the ketol-acid reductoisomerase family. Mg(2+) is required as a cofactor.

The enzyme catalyses (2R)-2,3-dihydroxy-3-methylbutanoate + NADP(+) = (2S)-2-acetolactate + NADPH + H(+). It carries out the reaction (2R,3R)-2,3-dihydroxy-3-methylpentanoate + NADP(+) = (S)-2-ethyl-2-hydroxy-3-oxobutanoate + NADPH + H(+). It participates in amino-acid biosynthesis; L-isoleucine biosynthesis; L-isoleucine from 2-oxobutanoate: step 2/4. Its pathway is amino-acid biosynthesis; L-valine biosynthesis; L-valine from pyruvate: step 2/4. Involved in the biosynthesis of branched-chain amino acids (BCAA). Catalyzes an alkyl-migration followed by a ketol-acid reduction of (S)-2-acetolactate (S2AL) to yield (R)-2,3-dihydroxy-isovalerate. In the isomerase reaction, S2AL is rearranged via a Mg-dependent methyl migration to produce 3-hydroxy-3-methyl-2-ketobutyrate (HMKB). In the reductase reaction, this 2-ketoacid undergoes a metal-dependent reduction by NADPH to yield (R)-2,3-dihydroxy-isovalerate. This Geobacter sulfurreducens (strain ATCC 51573 / DSM 12127 / PCA) protein is Ketol-acid reductoisomerase (NADP(+)).